A 410-amino-acid polypeptide reads, in one-letter code: MSSFDYLKTAIKQQGCTLQQVADASGMTKGYLSQLLNAKIKSPSAQKLEALHRFLGLEFPRRQKNIGVVFGKFYPLHTGHIYLIQRACSQVDELHIIMGYDDTRDRGLFEDSAMSQQPTVSDRLRWLLQTFKYQKNIRIHAFNEEGMEPYPHGWDVWSNGIKAFMAEKGIQPSWIYTSEEADAPQYLEHLGIETVLVDPERTFMNISGAQIRENPFRYWEYIPTEVKPFFVRTVAILGGESSGKSTLVNKLANIFNTTSAWEYGRDYVFSHLGGDEMALQYSDYDKIALGHAQYIDFAVKYANKVAFIDTDFVTTQAFCKKYEGREHPFVQALIDEYRFDLVILLENNTPWVADGLRSLGSSVDRKAFQNLLVEMLKENNIEFVHVKEADYDGRFLRCVELVKEMMGEQG.

The 56-residue stretch at 7-62 folds into the HTH cro/C1-type domain; the sequence is LKTAIKQQGCTLQQVADASGMTKGYLSQLLNAKIKSPSAQKLEALHRFLGLEFPRR. Positions 18-37 form a DNA-binding region, H-T-H motif; sequence LQQVADASGMTKGYLSQLLN. The segment at 63–229 is nicotinamide mononucleotide adenylyltransferase; it reads QKNIGVVFGK…EYIPTEVKPF (167 aa). Residues 70–73, histidine 77, arginine 104, 144–157, 177–179, 204–206, 259–261, and 294–297 contribute to the NAD(+) site; these read FGKF, EEGM…WDVW, TSE, MNI, SAW, and YIDF. The ribosylnicotinamide kinase stretch occupies residues 230-410; it reads FVRTVAILGG…LVKEMMGEQG (181 aa).

It in the central section; belongs to the bacterial NMN adenylyltransferase family. This sequence in the C-terminal section; belongs to the bacterial RNK family. In terms of assembly, homotetramer.

It is found in the cell membrane. The protein localises to the cytoplasm. It carries out the reaction beta-nicotinamide D-ribonucleotide + ATP + H(+) = diphosphate + NAD(+). It catalyses the reaction beta-nicotinamide D-riboside + ATP = beta-nicotinamide D-ribonucleotide + ADP + H(+). It functions in the pathway cofactor biosynthesis; NAD(+) biosynthesis [regulation]. It participates in cofactor biosynthesis; NAD(+) biosynthesis; NAD(+) from nicotinamide D-ribonucleotide: step 1/1. Feed-back regulated by NAD. A high level of NAD causes NadR to lose enzymatic activity and repress several NAD synthetic genes; conversely, a low NAD level activates the assimilatory enzymatic activities and leads to derepression of biosynthetic genes. In terms of biological role, this enzyme has three activities: DNA binding, nicotinamide mononucleotide (NMN) adenylyltransferase and ribosylnicotinamide (RN) kinase. The DNA-binding domain binds to the nadB operator sequence in an NAD- and ATP-dependent manner. As NAD levels increase within the cell, the affinity of NadR for the nadB operator regions of nadA, nadB, and pncB increases, repressing the transcription of these genes. The RN kinase activity catalyzes the phosphorylation of RN to form nicotinamide ribonucleotide. The NMN adenylyltransferase activity catalyzes the transfer of the AMP moiety of ATP to nicotinamide ribonucleotide to form NAD(+). The NMN adenylyltransferase domain also functions as the NAD and ATP sensor. This chain is Trifunctional NAD biosynthesis/regulator protein NadR (nadR), found in Salmonella typhimurium (strain LT2 / SGSC1412 / ATCC 700720).